A 257-amino-acid chain; its full sequence is Taurine import ATP-binding protein TauB (257 aa).

In terms of domain architecture, ABC transporter spans 6-233 (LDKISIHYDG…RYAAGEPIRA (228 aa)). An ATP-binding site is contributed by 38–45 (GRSGCGKT).

Belongs to the ABC transporter superfamily. Taurine importer (TC 3.A.1.17.1) family. As to quaternary structure, the complex is composed of two ATP-binding proteins (TauB), two transmembrane proteins (TauC) and a solute-binding protein (TauA).

It is found in the cell inner membrane. The catalysed reaction is taurine(out) + ATP + H2O = taurine(in) + ADP + phosphate + H(+). Functionally, part of the ABC transporter complex TauABC involved in taurine import. Responsible for energy coupling to the transport system. The polypeptide is Taurine import ATP-binding protein TauB (Mesorhizobium japonicum (strain LMG 29417 / CECT 9101 / MAFF 303099) (Mesorhizobium loti (strain MAFF 303099))).